Consider the following 423-residue polypeptide: Steroid hormone receptor ERR1 (423 aa).

The interval 1–67 is disordered; the sequence is MSSQVVGIEP…GAGPGEQGGG (67 aa). The tract at residues 1–76 is repressor domain; that stretch reads MSSQVVGIEP…GKLVLSSLPK (76 aa). A Glycyl lysine isopeptide (Lys-Gly) (interchain with G-Cter in SUMO) cross-link involves residue K14. Phosphoserine occurs at positions 19 and 22. Gly residues predominate over residues 58–67; that stretch reads GAGPGEQGGG. Positions 76 to 151 form a DNA-binding region, nuclear receptor; sequence KRLCLVCGDV…VGMLKEGVRL (76 aa). NR C4-type zinc fingers lie at residues 79–99 and 115–134; these read CLVC…CEAC and CPAS…CQAC. 4 positions are modified to N6-acetyllysine; by PCAF/KAT2B: K129, K138, K160, and K162. K189 is covalently cross-linked (Glycyl lysine isopeptide (Lys-Gly) (interchain with G-Cter in SUMO2)). The region spanning 193–421 is the NR LBD domain; sequence PVNALVSHLL…KLFLEMLEAM (229 aa). A Glycyl lysine isopeptide (Lys-Gly) (interchain with G-Cter in SUMO); alternate cross-link involves residue K403. K403 participates in a covalent cross-link: Glycyl lysine isopeptide (Lys-Gly) (interchain with G-Cter in SUMO2); alternate. An AF-2 domain region spans residues 403-423; it reads KLEGKVPMHKLFLEMLEAMMD.

It belongs to the nuclear hormone receptor family. NR3 subfamily. Binds DNA as a monomer or a homodimer. Interacts (via the AF2 domain) with coactivator PPARGC1A (via the L3 motif); the interaction greatly enhances transcriptional activity of genes involved in energy metabolism. Interacts with PIAS4; the interaction enhances sumoylation. Interacts with MAPK15; promotes re-localization of ESRRA to the cytoplasm through a XPO1-dependent mechanism then inhibits ESRRA transcriptional activity. In terms of processing, phosphorylation on Ser-19 enhances sumoylation on Lys-14 increasing repression of transcriptional activity. Sumoylated with SUMO2. Main site is Lys-14 which is enhanced by phosphorylation on Ser-19, cofactor activation, and by interaction with PIAS4. Sumoylation enhances repression of transcriptional activity, but has no effect on subcellular location nor on DNA binding. Post-translationally, reversibly acetylated. Acetylation by PCAF/KAT2 at Lys-129, Lys-138, Lys-160 and Lys-162 and PCAF/KAT2 decreases transcriptional activity probably by inhibiting DNA-binding activity; deacetylation involves SIRT1 and HDAC8 and increases DNA-binding.

It is found in the nucleus. The protein localises to the cytoplasm. Binds to an ERR-alpha response element (ERRE) containing a single consensus half-site, 5'-TNAAGGTCA-3'. Can bind to the medium-chain acyl coenzyme A dehydrogenase (MCAD) response element NRRE-1 and may act as an important regulator of MCAD promoter. Binds to the C1 region of the lactoferrin gene promoter. Requires dimerization and the coactivator, PGC-1A, for full activity. The ERRalpha/PGC1alpha complex is a regulator of energy metabolism. Induces the expression of PERM1 in the skeletal muscle. This Homo sapiens (Human) protein is Steroid hormone receptor ERR1 (ESRRA).